Consider the following 298-residue polypeptide: GTP cyclohydrolase FolE2 (298 aa).

Belongs to the GTP cyclohydrolase IV family.

It catalyses the reaction GTP + H2O = 7,8-dihydroneopterin 3'-triphosphate + formate + H(+). It participates in cofactor biosynthesis; 7,8-dihydroneopterin triphosphate biosynthesis; 7,8-dihydroneopterin triphosphate from GTP: step 1/1. In terms of biological role, converts GTP to 7,8-dihydroneopterin triphosphate. The chain is GTP cyclohydrolase FolE2 from Neisseria meningitidis serogroup C (strain 053442).